The sequence spans 209 residues: Na(+)-translocating NADH-quinone reductase subunit D (209 aa).

Helical transmembrane passes span leucine 42 to isoleucine 62, isoleucine 72 to alanine 92, valine 103 to methionine 123, phenylalanine 131 to leucine 151, and asparagine 178 to leucine 198.

The protein belongs to the NqrDE/RnfAE family. Composed of six subunits; NqrA, NqrB, NqrC, NqrD, NqrE and NqrF.

The protein localises to the cell inner membrane. It catalyses the reaction a ubiquinone + n Na(+)(in) + NADH + H(+) = a ubiquinol + n Na(+)(out) + NAD(+). Its function is as follows. NQR complex catalyzes the reduction of ubiquinone-1 to ubiquinol by two successive reactions, coupled with the transport of Na(+) ions from the cytoplasm to the periplasm. NqrA to NqrE are probably involved in the second step, the conversion of ubisemiquinone to ubiquinol. The sequence is that of Na(+)-translocating NADH-quinone reductase subunit D from Photorhabdus laumondii subsp. laumondii (strain DSM 15139 / CIP 105565 / TT01) (Photorhabdus luminescens subsp. laumondii).